The primary structure comprises 1946 residues: Chromodomain-helicase-DNA-binding protein 5 (1946 aa).

Disordered stretches follow at residues 1–140 (MRGP…SGQL), 236–272 (VPQT…GRGK), and 285–340 (SKRK…GDGY). Acidic residues-rich tracts occupy residues 17–37 (EEME…EGFE) and 72–90 (NDEM…ESEG). 2 stretches are compositionally biased toward basic residues: residues 96–118 (TKKK…KRKK) and 254–272 (GVRK…GRGK). The span at 293–303 (SEEDEREDSDL) shows a compositional bias: acidic residues. Over residues 323–332 (KKNKRRRKKK) the composition is skewed to basic residues. 2 consecutive PHD-type zinc fingers follow at residues 345 to 392 (QDYC…CEKE) and 418 to 465 (MEFC…CTCP). A histone-binding region spans residues 345–655 (QDYCEVCQQG…HRELMLGEDA (311 aa)). In terms of domain architecture, Chromo 1 spans 499–556 (MPPPRPLEGIPEREFFVKWAGLSYWHCSWVKELQLELYHTVMYRNYQRKNDMDEPPPF). Residues 551 to 573 (DEPPPFDYGSGDEDGKSEKRKNK) are disordered. Positions 563–573 (EDGKSEKRKNK) are enriched in basic and acidic residues. The 62-residue stretch at 594-655 (MMVHRILNHS…HRELMLGEDA (62 aa)) folds into the Chromo 2 domain. A Helicase ATP-binding domain is found at 714-898 (RFSWAQGTDT…FHLLNFLTPE (185 aa)). Position 727 to 734 (727 to 734 (DEMGLGKT)) interacts with ATP. Residues 849-852 (DEAH) carry the DEAH box motif. Positions 1030–1195 (LLQKMLKKLR…MTKQELDDIL (166 aa)) constitute a Helicase C-terminal domain. 5 disordered regions span residues 1210 to 1254 (MMSQ…VEDS), 1353 to 1413 (YNDA…LPPL), 1525 to 1566 (KYST…APLG), 1579 to 1696 (DEKE…EDKN), and 1926 to 1946 (SFPA…LQPF). Positions 1212-1230 (SQGQRPTTPIPDIQSTKGG) are enriched in polar residues. Acidic residues-rich tracts occupy residues 1357-1368 (SQEDQEWQDELS) and 1378-1387 (SEDEDEDFEE). N5-methylglutamine is present on glutamine 1392. A compositionally biased stretch (pro residues) spans 1551 to 1564 (TPVPASPAQLPPAP). Phosphoserine is present on serine 1556. 3 stretches are compositionally biased toward basic and acidic residues: residues 1602–1629 (DRVE…EVEK), 1637–1654 (PLKE…DKPE), and 1661–1676 (GDFR…KEPG).

Belongs to the SNF2/RAD54 helicase family. Component of the nucleosome remodeling and deacetylase (NuRD) repressor complex, composed of core proteins MTA1, MTA2, MTA3, RBBP4, RBBP7, HDAC1, HDAC2, MBD2, MBD3, and peripherally associated proteins CDK2AP1, CDK2AP2, GATAD2A, GATAD2B, CHD3, CHD4 and CHD5. The exact stoichiometry of the NuRD complex is unknown, and some subunits such as MBD2 and MBD3, GATAD2A and GATAD2B, and CHD3, CHD4 and CHD5 define mutually exclusive NuRD complexes. Interacts with HDAC2. Methylated at Gln-1392 by N6AMT1. As to expression, specifically expressed by neurons in brain, retina and adrenal gland (at protein level). Also detected in testis.

Its subcellular location is the nucleus. The protein localises to the chromosome. The enzyme catalyses ATP + H2O = ADP + phosphate + H(+). Its function is as follows. ATP-dependent chromatin-remodeling factor that binds DNA through histones and regulates gene transcription. May specifically recognize and bind trimethylated 'Lys-27' (H3K27me3) and non-methylated 'Lys-4' of histone H3. Acts as a component of the histone deacetylase NuRD complex which participates in the remodeling of chromatin. Plays a role in the development of the nervous system by activating the expression of genes promoting neuron terminal differentiation. In parallel, it may also positively regulate the trimethylation of histone H3 at 'Lys-27' thereby specifically repressing genes that promote the differentiation into non-neuronal cell lineages. Regulates the expression of genes involved in cell proliferation and differentiation. Downstream activated genes may include CDKN2A that positively regulates the p53/TP53 pathway, which in turn, prevents cell proliferation. In spermatogenesis, it probably regulates histone hyperacetylation and the replacement of histones by transition proteins in chromatin, a crucial step in the condensation of spermatid chromatin and the production of functional spermatozoa. The protein is Chromodomain-helicase-DNA-binding protein 5 (Chd5) of Mus musculus (Mouse).